Reading from the N-terminus, the 413-residue chain is Tyrosine--tRNA ligase (413 aa).

Y34 serves as a coordination point for L-tyrosine. The 'HIGH' region motif lies at P39–H48. L-tyrosine-binding residues include Y164 and Q168. The 'KMSKS' region motif lies at K225 to S229. Residue K228 participates in ATP binding. The 67-residue stretch at I347–F413 folds into the S4 RNA-binding domain.

The protein belongs to the class-I aminoacyl-tRNA synthetase family. TyrS type 1 subfamily. Homodimer.

It is found in the cytoplasm. The enzyme catalyses tRNA(Tyr) + L-tyrosine + ATP = L-tyrosyl-tRNA(Tyr) + AMP + diphosphate + H(+). In terms of biological role, catalyzes the attachment of tyrosine to tRNA(Tyr) in a two-step reaction: tyrosine is first activated by ATP to form Tyr-AMP and then transferred to the acceptor end of tRNA(Tyr). The protein is Tyrosine--tRNA ligase of Aster yellows witches'-broom phytoplasma (strain AYWB).